Reading from the N-terminus, the 372-residue chain is 2,7-anhydro-N-acetylneuraminate hydratase (372 aa).

10 residues coordinate NAD(+): Tyr11, Phe12, Asp33, Asn36, Thr68, Asn70, His73, Glu90, Lys91, and Trp160.

Belongs to the Gfo/Idh/MocA family. As to quaternary structure, homodimer. NAD(+) is required as a cofactor.

The catalysed reaction is N-acetyl-2,7-anhydro-alpha-neuraminate + H2O = N-acetyl-alpha-neuraminate. It catalyses the reaction 2-deoxy-2,3-dehydro-N-acetylneuraminate + H2O = N-acetyl-alpha-neuraminate. All conversions require NAD(+) as a cofactor, which is regenerated in the reaction. The presence of EGTA and several divalent cations does not affect the activity. Hydratase involved in the degradation of sialic acids. Catalyzes the reversible conversion of the dehydrated form of N-acetylneuraminate (Neu5Ac), 2,7-anhydro-N-acetylneuraminate (2,7-AN), to Neu5Ac. Also catalyzes the irreversible conversion of 2-deoxy-2,3-didehydro-N-acetylneuraminate (2,3-EN) to Neu5Ac. The reaction mechanism involves keto intermediates and the transient formation of NADH. The sequence is that of 2,7-anhydro-N-acetylneuraminate hydratase from Escherichia coli (strain K12).